Consider the following 828-residue polypeptide: Periplasmic nitrate reductase (828 aa).

Positions 1–31 (MKLSRRSFMKANAVAAAAAAAGLSVPGVARA) form a signal peptide, tat-type signal. Residues 39–95 (IKWDKAPCRFCGTGCGVLVGTQQGRVVACQGDPDAPVNRGLNCIKGYFLPKIMYGKD) enclose the 4Fe-4S Mo/W bis-MGD-type domain. [4Fe-4S] cluster is bound by residues cysteine 46, cysteine 49, cysteine 53, and cysteine 81. Mo-bis(molybdopterin guanine dinucleotide) is bound by residues lysine 83, glutamine 150, asparagine 175, cysteine 179, 212-219 (WGANMAEM), 243-247 (STYQH), 262-264 (QSD), methionine 372, glutamine 376, asparagine 482, 508-509 (SD), lysine 531, aspartate 558, and 718-727 (TGRVLEHWHT). Residue phenylalanine 794 coordinates substrate. 2 residues coordinate Mo-bis(molybdopterin guanine dinucleotide): asparagine 802 and lysine 819.

It belongs to the prokaryotic molybdopterin-containing oxidoreductase family. NasA/NapA/NarB subfamily. Component of the periplasmic nitrate reductase NapAB complex composed of NapA and NapB. The cofactor is [4Fe-4S] cluster. Requires Mo-bis(molybdopterin guanine dinucleotide) as cofactor. Predicted to be exported by the Tat system. The position of the signal peptide cleavage has not been experimentally proven.

It localises to the periplasm. It catalyses the reaction 2 Fe(II)-[cytochrome] + nitrate + 2 H(+) = 2 Fe(III)-[cytochrome] + nitrite + H2O. Catalytic subunit of the periplasmic nitrate reductase complex NapAB. Receives electrons from NapB and catalyzes the reduction of nitrate to nitrite. The chain is Periplasmic nitrate reductase from Escherichia coli O7:K1 (strain IAI39 / ExPEC).